Consider the following 364-residue polypeptide: Small ribosomal subunit biogenesis GTPase RsgA (364 aa).

Positions 101–264 (KGLVEKPGVP…VIDTPGLREL (164 aa)) constitute a CP-type G domain. GTP contacts are provided by residues 154–157 (NKSD) and 206–214 (GSSGAGKST). Cys288, Cys293, His295, and Cys301 together coordinate Zn(2+). Residues 339-364 (QVAQKRKRKTIPRQGKRWRREHGDGQ) form a disordered region. Positions 342–358 (QKRKRKTIPRQGKRWRR) are enriched in basic residues.

It belongs to the TRAFAC class YlqF/YawG GTPase family. RsgA subfamily. Monomer. Associates with 30S ribosomal subunit, binds 16S rRNA. The cofactor is Zn(2+).

It localises to the cytoplasm. Its function is as follows. One of several proteins that assist in the late maturation steps of the functional core of the 30S ribosomal subunit. Helps release RbfA from mature subunits. May play a role in the assembly of ribosomal proteins into the subunit. Circularly permuted GTPase that catalyzes slow GTP hydrolysis, GTPase activity is stimulated by the 30S ribosomal subunit. This chain is Small ribosomal subunit biogenesis GTPase RsgA, found in Syntrophotalea carbinolica (strain DSM 2380 / NBRC 103641 / GraBd1) (Pelobacter carbinolicus).